The chain runs to 1126 residues: Replication protein 1a (1126 aa).

The segment at 69-406 (SFSLDATQQN…HTIIGGVTLI (338 aa)) is methyltransferase. The region spanning 90 to 278 (VFSNSSSSSH…HRFSLLKHYL (189 aa)) is the Alphavirus-like MT domain. The region spanning 806-963 (DQSCVFASAE…HKLTGKVERK (158 aa)) is the (+)RNA virus helicase ATP-binding domain. The tract at residues 834-1094 (TIVDGVAGCG…RHKKTFKYFT (261 aa)) is ATP-dependent helicase. Position 838-845 (838-845 (GVAGCGKT)) interacts with ATP. In terms of domain architecture, (+)RNA virus helicase C-terminal spans 964–1125 (LITWRSPADA…SILARSYNHN (162 aa)).

This sequence belongs to the bromoviridae replication protein 1a family. As to quaternary structure, interacts with RNA-directed RNA polymerase 2a.

The protein resides in the host endoplasmic reticulum membrane. Its function is as follows. Involved in the virus replication. Contains a helicase domain and a methyltransferase domain. The methyltransferase domain is probably involved in viral RNA capping. Involved in the formation of ER membrane spherular invaginations in which RNA replication complexes form. This is Replication protein 1a from Alfalfa mosaic virus (AMV).